The following is a 431-amino-acid chain: Forkhead box protein N2 (431 aa).

The fork-head DNA-binding region spans 112 to 208 (KPPYSFSLLI…QALKKQPFSS (97 aa)). Residues 364-387 (DSGYASQPCAKISEKGQSGKKMRK) are disordered.

It is found in the nucleus. Binds to the purine-rich region in HTLV-I LTR. This is Forkhead box protein N2 (FOXN2) from Homo sapiens (Human).